A 248-amino-acid polypeptide reads, in one-letter code: Probable transcriptional regulatory protein RPD_4171 (248 aa).

The tract at residues 1–22 (MAGHSQFKNIMHRKGKQDAQRS) is disordered.

It belongs to the TACO1 family.

It localises to the cytoplasm. The polypeptide is Probable transcriptional regulatory protein RPD_4171 (Rhodopseudomonas palustris (strain BisB5)).